The primary structure comprises 414 residues: MAVNRRVPRVRDLAPLLQFNRPQFDTSKRRLGAALTIQDLRRIAKRRTPRAAFDYADGGAEDELSIARARQGFRDIEFHPTILRDVTTVCAGWNVLGQPTVLPFGIAPTGFTRLMHTEGEIAGARAAAAAGIPFSLSTLATCAIEDLVIAVPQGRKWFQLYMWRDRDRSMALVRRVAAAGFDTMLVTVDVPVAGARLRDVRNGMSIPPALTLRTVLDAMGHPRWWFDLLTTEPLAFASLDRWPGTVGEYLNTVFDPSLTFDDLAWIKSQWPGKLVVKGIQTLDDARAVVDRGVDGIVLSNHGGRQLDRAPVPFHLLPHVARELGKHTEILVDTGIMSGADIVAAIALGARCTLIGRAYLYGLMAGGEAGVNRAIEILQTGVIRTMRLLGVTCLEELSPRHVTQLRRLGPIGAPT.

Residues 29–406 form the FMN hydroxy acid dehydrogenase domain; the sequence is RRLGAALTIQ…SPRHVTQLRR (378 aa). Residue Y55 participates in a 2-oxocarboxylate binding. FMN is bound by residues S137 and Q159. Position 161 (Y161) interacts with a 2-oxocarboxylate. T187 lines the FMN pocket. Position 196 (R196) interacts with a 2-oxocarboxylate. Residue K277 coordinates FMN. The active-site Proton acceptor is H301. R304 contributes to the a 2-oxocarboxylate binding site. Residues 332–336 and 355–356 contribute to the FMN site; these read DTGIM and GR.

Belongs to the FMN-dependent alpha-hydroxy acid dehydrogenase family. It depends on FMN as a cofactor.

It catalyses the reaction (S)-lactate + A = pyruvate + AH2. This chain is Putative L-lactate dehydrogenase (lldD), found in Mycobacterium tuberculosis (strain ATCC 25618 / H37Rv).